The chain runs to 432 residues: Septin-14 (432 aa).

The Septin-type G domain maps to 49–315; the sequence is QGFTFNILCV…ECYRYQKLQK (267 aa). Residues 59-66 form a G1 motif region; the sequence is GETGIGKS. Residues 59–66, G114, 195–203, G249, and R264 contribute to the GTP site; these read GETGIGKS and KADTISKND. Residues 111–114 form a G3 motif region; sequence ETVG. Residues 194–197 form a G4 motif region; it reads AKAD. The stretch at 332–412 forms a coiled coil; that stretch reads EIFEAKRQEF…IIDFYKMKAA (81 aa). The required for interaction with SEPTIN4. Required for migration of cortical neurons during corticogenesis stretch occupies residues 369–432; the sequence is EAEKELQDKF…DTKKDKHRKK (64 aa).

It belongs to the TRAFAC class TrmE-Era-EngA-EngB-Septin-like GTPase superfamily. Septin GTPase family. Septins polymerize into heterooligomeric protein complexes that form filaments, and can associate with cellular membranes, actin filaments and microtubules. GTPase activity is required for filament formation. Interacts with ACTN4. Interacts with SEPTIN9. Interacts (via C-terminus) with SEPTIN4. Testis-specific (at protein level).

It is found in the cytoplasm. The protein localises to the cytoskeleton. Its subcellular location is the cell projection. The protein resides in the axon. It localises to the dendrite. It is found in the perikaryon. The protein localises to the perinuclear region. Its subcellular location is the cytoplasmic vesicle. The protein resides in the secretory vesicle. It localises to the acrosome. Functionally, filament-forming cytoskeletal GTPase. Involved in the migration of cortical neurons and the formation of neuron leading processes during embryonic development. Plays a role in sperm head formation during spermiogenesis, potentially via facilitating localization of ACTN4 to cell filaments. This is Septin-14 from Homo sapiens (Human).